The primary structure comprises 981 residues: Polyhomeotic-like protein 3 (981 aa).

A compositionally biased stretch (low complexity) spans methionine 1–serine 28. Disordered regions lie at residues methionine 1–proline 33, leucine 102–leucine 127, leucine 224–threonine 280, and glutamine 307–proline 407. Over residues leucine 224–isoleucine 255 the composition is skewed to polar residues. Residues serine 231, serine 261, serine 269, and serine 312 each carry the phosphoserine modification. A compositionally biased stretch (basic and acidic residues) spans serine 256–lysine 266. The span at glutamine 321–serine 340 shows a compositional bias: low complexity. Polar residues predominate over residues alanine 360–glutamine 373. The segment covering valine 381–valine 395 has biased composition (low complexity). Phosphothreonine occurs at positions 607 and 612. Residue serine 614 is modified to Phosphoserine. Residues lysine 650–proline 690 form a disordered region. Low complexity predominate over residues isoleucine 667–leucine 686. Residues lysine 689 and lysine 730 each participate in a glycyl lysine isopeptide (Lys-Gly) (interchain with G-Cter in SUMO2) cross-link. Positions lysine 689–valine 718 match the HD1 motif. Phosphoserine is present on residues serine 759 and serine 760. An FCS-type zinc finger spans residues glutamate 774 to lysine 808. The Zn(2+) site is built by cysteine 783, cysteine 786, cysteine 802, and cysteine 806. Lysine 808 participates in a covalent cross-link: Glycyl lysine isopeptide (Lys-Gly) (interchain with G-Cter in SUMO2). Disordered regions lie at residues arginine 825–glycine 844 and glutamate 863–arginine 888. The SAM domain occupies tryptophan 917 to serine 981.

As to quaternary structure, component of a PRC1-like complex. In terms of tissue distribution, ubiquitous expression.

The protein localises to the nucleus. Component of a Polycomb group (PcG) multiprotein PRC1-like complex, a complex class required to maintain the transcriptionally repressive state of many genes, including Hox genes, throughout development. PcG PRC1 complex acts via chromatin remodeling and modification of histones; it mediates monoubiquitination of histone H2A 'Lys-119', rendering chromatin heritably changed in its expressibility. This chain is Polyhomeotic-like protein 3 (Phc3), found in Mus musculus (Mouse).